We begin with the raw amino-acid sequence, 442 residues long: Histidinol dehydrogenase (442 aa).

NAD(+) contacts are provided by Y132, Q194, and N217. The substrate site is built by S243, Q265, and H268. 2 residues coordinate Zn(2+): Q265 and H268. Catalysis depends on proton acceptor residues E332 and H333. Residues H333, D366, E420, and H425 each contribute to the substrate site. D366 is a binding site for Zn(2+). Residue H425 participates in Zn(2+) binding.

It belongs to the histidinol dehydrogenase family. Requires Zn(2+) as cofactor.

The enzyme catalyses L-histidinol + 2 NAD(+) + H2O = L-histidine + 2 NADH + 3 H(+). It participates in amino-acid biosynthesis; L-histidine biosynthesis; L-histidine from 5-phospho-alpha-D-ribose 1-diphosphate: step 9/9. Catalyzes the sequential NAD-dependent oxidations of L-histidinol to L-histidinaldehyde and then to L-histidine. The protein is Histidinol dehydrogenase of Idiomarina loihiensis (strain ATCC BAA-735 / DSM 15497 / L2-TR).